Consider the following 710-residue polypeptide: MQGKKPGGSSGGGRSGELQGDEAQRNKKKKKKVSCFSNIKIFLVSECALMLAQGTVGAYLVSVLTTLERRFNLQSADVGVIASSFEIGNLALILFVSYFGARGHRPRLIGCGGIVMALGALLSALPEFLTHQYKYEAGEIRWGAEGRDVCAANGSGGDEGPDPDLICRNRTATNMMYLLLIGAQVLLGIGATPVQPLGVSYIDDHVRRKDSSLYIGILFTMLVFGPACGFILGSFCTKIYVDAVFIDTSNLDITPDDPRWIGAWWGGFLLCGALLFFSSLLMFGFPQSLPPHSEPAMESEQAMLSEREYERPKPSNGVLRHPLEPDSSASCFQQLRVIPKVTKHLLSNPVFTCIILAACMEIAVVAGFAAFLGKYLEQQFNLTTSSANQLLGMTAIPCACLGIFLGGLLVKKLSLSALGAIRMAMLVNLVSTACYVSFLFLGCDTGPVAGVTVPYGNSTAPGSALDPYSPCNNNCECQTDSFTPVCGADGITYLSACFAGCNSTNLTGCACLTTVPAENATVVPGKCPSPGCQEAFLTFLCVMCICSLIGAMAQTPSVIILIRTVSPELKSYALGVLFLLLRLLGFIPPPLIFGAGIDSTCLFWSTFCGEQGACVLYDNVVYRYLYVSIAIALKSFAFILYTTTWQCLRKNYKRYIKNHEGGLSTSEFFASTLTLDNLGRDPVPANQTHRTKFIYNLEDHEWCENMESVL.

Met-1 carries the post-translational modification N-acetylmethionine. The span at 1–15 (MQGKKPGGSSGGGRS) shows a compositional bias: gly residues. Positions 1-25 (MQGKKPGGSSGGGRSGELQGDEAQR) are disordered. Residues 1–40 (MQGKKPGGSSGGGRSGELQGDEAQRNKKKKKKVSCFSNIK) lie on the Cytoplasmic side of the membrane. Residues 41–60 (IFLVSECALMLAQGTVGAYL) form a helical membrane-spanning segment. At 61–79 (VSVLTTLERRFNLQSADVG) the chain is on the extracellular side. A helical transmembrane segment spans residues 80–100 (VIASSFEIGNLALILFVSYFG). Over 101–106 (ARGHRP) the chain is Cytoplasmic. Residues 107–131 (RLIGCGGIVMALGALLSALPEFLTH) traverse the membrane as a helical segment. The Extracellular portion of the chain corresponds to 132–174 (QYKYEAGEIRWGAEGRDVCAANGSGGDEGPDPDLICRNRTATN). Asn-153 and Asn-169 each carry an N-linked (GlcNAc...) asparagine glycan. The helical transmembrane segment at 175–203 (MMYLLLIGAQVLLGIGATPVQPLGVSYID) threads the bilayer. At 204–222 (DHVRRKDSSLYIGILFTML) the chain is on the cytoplasmic side. A helical membrane pass occupies residues 223 to 243 (VFGPACGFILGSFCTKIYVDA). At 244–261 (VFIDTSNLDITPDDPRWI) the chain is on the extracellular side. A helical transmembrane segment spans residues 262–286 (GAWWGGFLLCGALLFFSSLLMFGFP). The Cytoplasmic segment spans residues 287-344 (QSLPPHSEPAMESEQAMLSEREYERPKPSNGVLRHPLEPDSSASCFQQLRVIPKVTKH). Residues 345–366 (LLSNPVFTCIILAACMEIAVVA) traverse the membrane as a helical segment. The Extracellular segment spans residues 367 to 386 (GFAAFLGKYLEQQFNLTTSS). N-linked (GlcNAc...) asparagine glycosylation occurs at Asn-381. A helical membrane pass occupies residues 387-410 (ANQLLGMTAIPCACLGIFLGGLLV). The Cytoplasmic portion of the chain corresponds to 411–414 (KKLS). The chain crosses the membrane as a helical span at residues 415–438 (LSALGAIRMAMLVNLVSTACYVSF). Residues 439–539 (LFLGCDTGPV…PGCQEAFLTF (101 aa)) lie on the Extracellular side of the membrane. Asn-457 carries N-linked (GlcNAc...) asparagine glycosylation. Residues 465–513 (LDPYSPCNNNCECQTDSFTPVCGADGITYLSACFAGCNSTNLTGCACLT) enclose the Kazal-like domain. 3 disulfides stabilise this stretch: Cys-471–Cys-501, Cys-477–Cys-497, and Cys-486–Cys-511. Residues Asn-502, Asn-505, and Asn-519 are each glycosylated (N-linked (GlcNAc...) asparagine). A helical membrane pass occupies residues 540 to 562 (LCVMCICSLIGAMAQTPSVIILI). Over 563–571 (RTVSPELKS) the chain is Cytoplasmic. The chain crosses the membrane as a helical span at residues 572–597 (YALGVLFLLLRLLGFIPPPLIFGAGI). The Extracellular segment spans residues 598 to 630 (DSTCLFWSTFCGEQGACVLYDNVVYRYLYVSIA). A helical membrane pass occupies residues 631–648 (IALKSFAFILYTTTWQCL). Residues 649-705 (RKNYKRYIKNHEGGLSTSEFFASTLTLDNLGRDPVPANQTHRTKFIYNLEDHEWCEN) are Cytoplasmic-facing.

This sequence belongs to the organo anion transporter (TC 2.A.60) family. Generally the expression of isoform 1 is higher than that of isoform 2. As to expression, expressed in placental trophoblasts. Expressed in pancreas, kidney, liver, lung, brain, heart, cerebellum, peripheral blood leukocyte, colon, small intestine, ovary, testis, prostate, thyroid, thymus and spleen. Expressed in fetal brain, heart, kidney, liver, lung, skeletal muscle, spleen and pancreas. In testis, detected in spermatogonia at different stages and absent from Sertoli cells. Expressed in the choroid plexus epithelium, at the basolateral membrane. In brain, also very abundant in the gray matter of the frontal cortex, but not associated with neuronal cell bodies. Not detected in the white matter. In terms of tissue distribution, expressed in heart, brain, cerebellum, testis, lung, thyroid, spoleen and liver. In testis, primarily localized to the basal membrane of Sertoli cells and weakly expressed within the tubules. In testis, also present in spermatogonia at different stages. In brain, expressed in the choroid plexus epithelium, at the apical membrane as well as in the subapical intracellular vesicular compartments. In brain, also associated with neuronal bodies and axons in both the gray and the white matters of the frontal cortex.

It is found in the basolateral cell membrane. It localises to the apical cell membrane. The protein resides in the basal cell membrane. The enzyme catalyses L-thyroxine(out) = L-thyroxine(in). It catalyses the reaction prostaglandin E1(out) = prostaglandin E1(in). The catalysed reaction is prostaglandin E2(out) = prostaglandin E2(in). It carries out the reaction prostaglandin F2alpha(out) = prostaglandin F2alpha(in). The enzyme catalyses (5Z,8Z,11Z,14Z)-eicosatetraenoate(out) = (5Z,8Z,11Z,14Z)-eicosatetraenoate(in). It catalyses the reaction taurocholate(out) = taurocholate(in). The catalysed reaction is glycocholate(out) = glycocholate(in). It carries out the reaction estrone 3-sulfate(out) = estrone 3-sulfate(in). The enzyme catalyses argipressin(out) = argipressin(in). With respect to regulation, stimulated by extracellular acidic pH. Its function is as follows. Putative organic anion antiporter with apparent broad substrate specificity. Recognizes various substrates including thyroid hormone L-thyroxine, prostanoids such as prostaglandin E1 and E2, bile acids such as taurocholate, glycolate and glycochenodeoxycholate and peptide hormones such as L-arginine vasopressin, likely operating in a tissue-specific manner. The transport mechanism, its electrogenicity and potential tissue-specific counterions remain to be elucidated. In Homo sapiens (Human), this protein is Solute carrier organic anion transporter family member 3A1 (SLCO3A1).